A 97-amino-acid chain; its full sequence is uncharacterized protein (97 aa).

The tract at residues 58–97 (SLLLPRTVQTGGTEREKPGPGQRKRGAHCSACKRSSTRPS) is disordered.

This is an uncharacterized protein from Homo sapiens (Human).